A 340-amino-acid polypeptide reads, in one-letter code: ATP-dependent 6-phosphofructokinase (340 aa).

Residue Gly11 participates in ATP binding. 21-25 (RAVVR) contacts ADP. ATP is bound by residues 72–73 (RY) and 102–105 (GDGS). Asp103 contributes to the Mg(2+) binding site. Position 125–127 (125–127 (TID)) interacts with substrate. The Proton acceptor role is filled by Asp127. An ADP-binding site is contributed by Arg154. Substrate is bound by residues Arg162 and 169 to 171 (MGR). ADP contacts are provided by residues 185–187 (GAD) and 213–215 (KHH). Residues Glu222, Arg244, and 250 to 253 (HLLR) each bind substrate.

The protein belongs to the phosphofructokinase type A (PFKA) family. ATP-dependent PFK group I subfamily. Prokaryotic clade 'B1' sub-subfamily. In terms of assembly, homotetramer. Mg(2+) serves as cofactor.

The protein resides in the cytoplasm. It catalyses the reaction beta-D-fructose 6-phosphate + ATP = beta-D-fructose 1,6-bisphosphate + ADP + H(+). The protein operates within carbohydrate degradation; glycolysis; D-glyceraldehyde 3-phosphate and glycerone phosphate from D-glucose: step 3/4. Its activity is regulated as follows. Allosterically activated by ADP and other diphosphonucleosides, and allosterically inhibited by phosphoenolpyruvate. Functionally, catalyzes the phosphorylation of D-fructose 6-phosphate to fructose 1,6-bisphosphate by ATP, the first committing step of glycolysis. This Streptococcus agalactiae serotype Ia (strain ATCC 27591 / A909 / CDC SS700) protein is ATP-dependent 6-phosphofructokinase.